A 339-amino-acid chain; its full sequence is Serpentine receptor class alpha-21 (339 aa).

Transmembrane regions (helical) follow at residues 30–50, 150–170, 199–219, 250–270, and 282–302; these read FNFL…WLAI, FIAV…FYIA, VRTV…YLSV, ILIV…NLLL, and VLVA…PLVI.

This sequence belongs to the nematode receptor-like protein sra family.

The protein localises to the membrane. The sequence is that of Serpentine receptor class alpha-21 (sra-21) from Caenorhabditis elegans.